The sequence spans 464 residues: Anthranilate synthase component 1 (464 aa).

Residues serine 41 and 236 to 238 each bind L-tryptophan; that span reads PYM. 271–272 contacts chorismate; sequence GT. Residue glutamate 298 coordinates Mg(2+). Chorismate contacts are provided by residues tyrosine 386, arginine 406, 420–422, and glycine 422; that span reads GAG. Glutamate 435 serves as a coordination point for Mg(2+).

The protein belongs to the anthranilate synthase component I family. As to quaternary structure, heterotetramer consisting of two non-identical subunits: a beta subunit (TrpG) and a large alpha subunit (TrpE). Mg(2+) is required as a cofactor.

It catalyses the reaction chorismate + L-glutamine = anthranilate + pyruvate + L-glutamate + H(+). It functions in the pathway amino-acid biosynthesis; L-tryptophan biosynthesis; L-tryptophan from chorismate: step 1/5. With respect to regulation, feedback inhibited by tryptophan. Part of a heterotetrameric complex that catalyzes the two-step biosynthesis of anthranilate, an intermediate in the biosynthesis of L-tryptophan. In the first step, the glutamine-binding beta subunit (TrpG) of anthranilate synthase (AS) provides the glutamine amidotransferase activity which generates ammonia as a substrate that, along with chorismate, is used in the second step, catalyzed by the large alpha subunit of AS (TrpE) to produce anthranilate. In the absence of TrpG, TrpE can synthesize anthranilate directly from chorismate and high concentrations of ammonia. This chain is Anthranilate synthase component 1 (trpE), found in Methanothermobacter thermautotrophicus (strain ATCC 29096 / DSM 1053 / JCM 10044 / NBRC 100330 / Delta H) (Methanobacterium thermoautotrophicum).